A 315-amino-acid chain; its full sequence is Acetaldehyde dehydrogenase (315 aa).

13 to 16 (SGNI) lines the NAD(+) pocket. The active-site Acyl-thioester intermediate is C143. Residues 174–182 (SAGPGTRKN) and N285 each bind NAD(+).

The protein belongs to the acetaldehyde dehydrogenase family.

It catalyses the reaction acetaldehyde + NAD(+) + CoA = acetyl-CoA + NADH + H(+). The chain is Acetaldehyde dehydrogenase from Shewanella woodyi (strain ATCC 51908 / MS32).